A 245-amino-acid chain; its full sequence is tRNA1(Val) (adenine(37)-N6)-methyltransferase (245 aa).

The protein belongs to the methyltransferase superfamily. tRNA (adenine-N(6)-)-methyltransferase family.

The protein resides in the cytoplasm. The enzyme catalyses adenosine(37) in tRNA1(Val) + S-adenosyl-L-methionine = N(6)-methyladenosine(37) in tRNA1(Val) + S-adenosyl-L-homocysteine + H(+). Its function is as follows. Specifically methylates the adenine in position 37 of tRNA(1)(Val) (anticodon cmo5UAC). The polypeptide is tRNA1(Val) (adenine(37)-N6)-methyltransferase (Enterobacter sp. (strain 638)).